Consider the following 462-residue polypeptide: Glycine--tRNA ligase (462 aa).

The substrate site is built by Arg100 and Glu174. Residues 206 to 208 (RNE), 216 to 221 (FRTREF), 290 to 291 (EL), and 334 to 337 (GADR) contribute to the ATP site. Residue 221 to 225 (FEQME) coordinates substrate. 330-334 (EPSLG) contributes to the substrate binding site.

Belongs to the class-II aminoacyl-tRNA synthetase family. Homodimer.

Its subcellular location is the cytoplasm. It carries out the reaction tRNA(Gly) + glycine + ATP = glycyl-tRNA(Gly) + AMP + diphosphate. Catalyzes the attachment of glycine to tRNA(Gly). The polypeptide is Glycine--tRNA ligase (Ruminiclostridium cellulolyticum (strain ATCC 35319 / DSM 5812 / JCM 6584 / H10) (Clostridium cellulolyticum)).